The sequence spans 555 residues: E3 ubiquitin-protein ligase ARIH1 (555 aa).

Residues 1–47 are compositionally biased toward acidic residues; that stretch reads MDSDEGYNYEFDEDEECSEEDSGAEEEEDDDEDEPDDDNLDLGEVEL. The tract at residues 1–93 is disordered; it reads MDSDEGYNYE…GGGGGPGHEQ (93 aa). Positions 65–90 are enriched in gly residues; it reads ETGGGGGSALGPGGGGGGGGGGGGPG. Residues 103–151 form a UBA-like region; that stretch reads TAEQILQHMVECIREVNEVIQNPATITRILLSHFNWDKEKLMERYFDGN. Lysine 140 carries the N6-acetyllysine modification. Positions 180-391 are TRIAD supradomain; the sequence is QDMPCQICYL…SAWYNCNRYN (212 aa). The Zn(2+) site is built by cysteine 184, cysteine 187, cysteine 201, histidine 203, cysteine 206, cysteine 209, cysteine 229, cysteine 234, cysteine 274, cysteine 279, cysteine 295, cysteine 297, cysteine 302, cysteine 305, histidine 310, cysteine 315, cysteine 342, and cysteine 345. Residues 184–234 form an RING-type 1 zinc finger; it reads CQICYLNYPNSYFTGLECGHKFCMQCWSEYLTTKIMEEGMGQTISCPAHGC. The IBR-type zinc-finger motif lies at 254–315; the sequence is LKYQHLITNS…GENWHDPVKC (62 aa). The RING-type 2; atypical zinc finger occupies 342 to 373; the sequence is CPKCHVTIEKDGGCNHMVCRNQNCKAEFCWVC. The active site involves cysteine 355. Zn(2+)-binding residues include cysteine 360, cysteine 365, cysteine 370, cysteine 373, histidine 380, and cysteine 387. The tract at residues 406 to 555 is ariadne domain; that stretch reads RAALQRYLFY…EKDLWEYIED (150 aa).

Belongs to the RBR family. Ariadne subfamily. In terms of assembly, interacts (via the first RING-type zinc finger) with UBE2L3. Associates with cullin-RING ubiquitin ligase (CRL) complexes containing CUL1, CUL2 and CUL3. Interacts with neddylated CUL1. Interacts with neddylated CUL2. Interacts with neddylated CUL3. Interacts with neddylated CUL4A. As to expression, widely expressed.

It localises to the cytoplasm. It is found in the nucleus. Its subcellular location is the cajal body. It catalyses the reaction [E2 ubiquitin-conjugating enzyme]-S-ubiquitinyl-L-cysteine + [acceptor protein]-L-lysine = [E2 ubiquitin-conjugating enzyme]-L-cysteine + [acceptor protein]-N(6)-ubiquitinyl-L-lysine.. Its pathway is protein modification; protein ubiquitination. Its activity is regulated as follows. Autoinhibited by the ariadne domain, which masks the second RING-type zinc finger that contains the active site and inhibits the E3 activity. Inhibition is relieved upon binding to neddylated cullin-RING ubiquitin ligase complexes, which activate the E3 ligase activity of ARIH1. Functionally, E3 ubiquitin-protein ligase, which catalyzes ubiquitination of target proteins together with ubiquitin-conjugating enzyme E2 UBE2L3. Acts as an atypical E3 ubiquitin-protein ligase by working together with cullin-RING ubiquitin ligase (CRL) complexes and initiating ubiquitination of CRL substrates: associates with CRL complexes and specifically mediates addition of the first ubiquitin on CRLs targets. The initial ubiquitin is then elongated by CDC34/UBE2R1 and UBE2R2. E3 ubiquitin-protein ligase activity is activated upon binding to neddylated cullin-RING ubiquitin ligase complexes. Plays a role in protein translation in response to DNA damage by mediating ubiquitination of EIF4E2, the consequences of EIF4E2 ubiquitination are however unclear. According to a report, EIF4E2 ubiquitination leads to promote EIF4E2 cap-binding and protein translation arrest. According to another report EIF4E2 ubiquitination leads to its subsequent degradation. Acts as the ligase involved in ISGylation of EIF4E2. In vitro, controls the degradation of the LINC (LInker of Nucleoskeleton and Cytoskeleton) complex member SUN2 and may therefore have a role in the formation and localization of the LINC complex, and as a consequence, may act in nuclear subcellular localization and nuclear morphology. The polypeptide is E3 ubiquitin-protein ligase ARIH1 (Arih1) (Mus musculus (Mouse)).